Consider the following 567-residue polypeptide: Hydroxylamine reductase 2 (567 aa).

Residues Cys5, Cys8, Cys17, and Cys23 each coordinate [4Fe-4S] cluster. His262, Glu286, Cys330, Cys421, Cys449, Cys474, Glu509, and Lys511 together coordinate hybrid [4Fe-2O-2S] cluster. The residue at position 421 (Cys421) is a Cysteine persulfide.

Belongs to the HCP family. Requires [4Fe-4S] cluster as cofactor. Hybrid [4Fe-2O-2S] cluster serves as cofactor.

The protein resides in the cytoplasm. The catalysed reaction is A + NH4(+) + H2O = hydroxylamine + AH2 + H(+). In terms of biological role, catalyzes the reduction of hydroxylamine to form NH(3) and H(2)O. This chain is Hydroxylamine reductase 2, found in Clostridium acetobutylicum (strain ATCC 824 / DSM 792 / JCM 1419 / IAM 19013 / LMG 5710 / NBRC 13948 / NRRL B-527 / VKM B-1787 / 2291 / W).